The following is a 145-amino-acid chain: Monooxygenase AacuP (145 aa).

It belongs to the avfA family.

The protein operates within secondary metabolite biosynthesis. Monooxygenase; part of the gene cluster that mediates the biosynthesis of the tetrahydroxanthone dimer secalonic acid D. The pathway begins with the synthesis of atrochrysone thioester by the polyketide synthase AacuL. The atrochrysone carboxyl ACP thioesterase AacuM then breaks the thioester bond and releases the atrochrysone carboxylic acid from AacuL. Atrochrysone carboxylic acid is decarboxylated by the decarboxylase AacuI, and oxidized by the anthrone oxygenase AacuG to yield emodin. Emodin is then reduced to emodin hydroquinone by a yet unidentified oxidoreductase. A-ring reduction by the short chain dehydrogenase AacuN, dehydration by the scytalone dehydratase-like protein AacuK and probable spontaneous re-oxidation, results in overall deoxygenation to chrysophanol. Baeyer-Villiger oxidation by the Baeyer-Villiger monooxygenase (BVMO) AacuH then yields monodictyphenone. Monodictyphenone is transformed into compounds with the tetrahydroxanthone skeleton via methylesterification by the methyltransferase AacuQ, followed by the action of the flavin-dependent monooxygenase AacuC, the isomerase AacuP, and the short chain dehydrogenase/reductase AacuF or AacuD. AacuF and AacuD should accept the same compound as a substrate but perform the ketoreduction with a different stereoselectivity, thus yielding blennolides B and A, respectively. In the final step of the biosynthesis, the cytochrome P450 monooxygenase AacuE accepts blennolide B and/or blennolide A to conduct the dimerization reaction to furnish the tetrahydroxanthone dimers, secalonic acids D, B, and F. This chain is Monooxygenase AacuP, found in Aspergillus aculeatus (strain ATCC 16872 / CBS 172.66 / WB 5094).